The sequence spans 98 residues: Keratin-associated protein 3-3 (98 aa).

Tandem repeats lie at residues Cys3 to Arg7, Cys47 to Cys51, and Cys89 to Cys93. The segment at Cys3 to Gln59 is 3 X 5 AA repeats of C-C-X(3).

This sequence belongs to the KRTAP type 3 family. In terms of assembly, interacts with hair keratins. In terms of tissue distribution, localized to the upper cortex of the hair shaft.

In the hair cortex, hair keratin intermediate filaments are embedded in an interfilamentous matrix, consisting of hair keratin-associated proteins (KRTAP), which are essential for the formation of a rigid and resistant hair shaft through their extensive disulfide bond cross-linking with abundant cysteine residues of hair keratins. The matrix proteins include the high-sulfur and high-glycine-tyrosine keratins. This chain is Keratin-associated protein 3-3 (KRTAP3-3), found in Homo sapiens (Human).